A 325-amino-acid polypeptide reads, in one-letter code: MSWISPELIEILLTILKAVVILLVVVTCGAFMSFGERRLLGLFQNRYGPNRVGWGGSLQLVADMIKMFFKEDWIPKFSDRVIFTLAPMIAFTSLLLAFAIVPVSPGWVVADLNIGILFFLMMAGLAVYAVLFAGWSSNNKYSLLGAMRASAQTLSYEVFLGLSLMGVVAQAGSFNMTDIVNSQAHVWNVIPQFFGFITFAIAGVAVCHRHPFDQPEAEQELADGYHIEYSGMKFGLFFVGEYIGIVTISALMVTLFFGGWQGPLLPPFIWFALKTAFFMMMFILIRASLPRPRYDQVMSFGWKICLPLTLINLLVTAAVILWQAQ.

8 helical membrane passes run 11-31 (ILLT…CGAF), 81-101 (VIFT…FAIV), 114-134 (IGIL…LFAG), 154-174 (LSYE…AGSF), 186-206 (VWNV…GVAV), 237-257 (FFVG…TLFF), 265-285 (LPPF…FILI), and 304-324 (ICLP…LWQA).

This sequence belongs to the complex I subunit 1 family. In terms of assembly, NDH-1 is composed of 13 different subunits. Subunits NuoA, H, J, K, L, M, N constitute the membrane sector of the complex.

It is found in the cell inner membrane. The enzyme catalyses a quinone + NADH + 5 H(+)(in) = a quinol + NAD(+) + 4 H(+)(out). Its function is as follows. NDH-1 shuttles electrons from NADH, via FMN and iron-sulfur (Fe-S) centers, to quinones in the respiratory chain. The immediate electron acceptor for the enzyme in this species is believed to be ubiquinone. Couples the redox reaction to proton translocation (for every two electrons transferred, four hydrogen ions are translocated across the cytoplasmic membrane), and thus conserves the redox energy in a proton gradient. This subunit may bind ubiquinone. The protein is NADH-quinone oxidoreductase subunit H of Escherichia coli O139:H28 (strain E24377A / ETEC).